We begin with the raw amino-acid sequence, 112 residues long: UPF0060 membrane protein SAV_4756 (112 aa).

4 helical membrane-spanning segments follow: residues 8–28 (ALFV…WQGV), 33–53 (GWLW…VATL), 62–82 (ILAA…MVAD), and 91–111 (VTGA…PRGG).

The protein belongs to the UPF0060 family.

It is found in the cell membrane. The protein is UPF0060 membrane protein SAV_4756 of Streptomyces avermitilis (strain ATCC 31267 / DSM 46492 / JCM 5070 / NBRC 14893 / NCIMB 12804 / NRRL 8165 / MA-4680).